A 111-amino-acid polypeptide reads, in one-letter code: Nucleoid-associated protein Ppha_1174 (111 aa).

It belongs to the YbaB/EbfC family. Homodimer.

It localises to the cytoplasm. It is found in the nucleoid. In terms of biological role, binds to DNA and alters its conformation. May be involved in regulation of gene expression, nucleoid organization and DNA protection. In Pelodictyon phaeoclathratiforme (strain DSM 5477 / BU-1), this protein is Nucleoid-associated protein Ppha_1174.